Here is a 214-residue protein sequence, read N- to C-terminus: MNSTKSPASHHTERGCFKNSQVLSWTIAGASILFLSGCFITRCVVTYRSSQISGQNLQPHRNIKELSCYSEASGSVKNCCPLNWKHYQSSCYFFSTTTLTWSSSLKNCSDMGAHLVVIDTQEEQEFLFRTKPKRKEFYIGLTDQVVEGQWQWVDDTPFTESLSFWDAGEPNNIVLVEDCATIRDSSNSRKNWNDIPCFYSMPWICEMPEISPLD.

Residues 1–22 (MNSTKSPASHHTERGCFKNSQV) are Cytoplasmic-facing. Residues 23-45 (LSWTIAGASILFLSGCFITRCVV) traverse the membrane as a helical; Signal-anchor for type II membrane protein segment. Over 46-214 (TYRSSQISGQ…CEMPEISPLD (169 aa)) the chain is Extracellular. Cys80 and Cys91 are oxidised to a cystine. Residues 87–206 (YQSSCYFFST…CFYSMPWICE (120 aa)) form the C-type lectin domain. The N-linked (GlcNAc...) asparagine glycan is linked to Asn107. Cystine bridges form between Cys108/Cys205 and Cys179/Cys197. The Ca(2+) site is built by Val117, Glu123, Glu169, Asn171, Asn193, Asp194, and Glu206. The Confers specificity for glucose/mannose-type carbohydrates signature appears at 169–171 (EPN).

In terms of assembly, monomer and homodimer. Interacts with signaling adapter Fc receptor gamma chain/FCER1G to form a functional complex; the interaction is direct. Alternatively, acts as a bridge for interaction between CLEC4D and FCER1G. A heterodimer of CLEC4E and CLEC4D associates with FCER1G to form a functional complex. Interacts with SAP130 nuclear protein that is released from necrotic cells; the interaction is direct. In terms of tissue distribution, highly expressed in macrophages in response to stimulation with bacterial glycolipids and pro-inflammatory cytokines. Expressed in dendritic cells (at protein level) in response to stimulation with mycobacterial trehalose 6,6'-dimycolate (TDM).

It is found in the cell membrane. The protein localises to the cell projection. Its subcellular location is the phagocytic cup. Calcium-dependent lectin that acts as a pattern recognition receptor (PRR) of the innate immune system: recognizes damage-associated molecular patterns (DAMPs) of abnormal self and pathogen-associated molecular patterns (PAMPs) of bacteria and fungi. The PAMPs notably include mycobacterial trehalose 6,6'-dimycolate (TDM), a cell wall glycolipid with potent adjuvant immunomodulatory functions. Interacts with signaling adapter Fc receptor gamma chain/FCER1G to form a functional complex in myeloid cells. Binding of mycobacterial trehalose 6,6'-dimycolate (TDM) to this receptor complex leads to phosphorylation of the immunoreceptor tyrosine-based activation motif (ITAM) of FCER1G, triggering activation of SYK, CARD9 and NF-kappa-B, consequently driving maturation of antigen-presenting cells and shaping antigen-specific priming of T-cells toward effector T-helper 1 (Th1) and T-helper 17 (Th17) cell subtypes. Also recognizes alpha-mannose residues on pathogenic fungi of the genus Malassezia and mediates macrophage activation. Through recognition of DAMPs released upon nonhomeostatic cell death, enables immune sensing of damaged self and promotes inflammatory cell infiltration into the damaged tissue. This chain is C-type lectin domain family 4 member E, found in Mus musculus (Mouse).